The sequence spans 438 residues: Serine hydroxymethyltransferase (438 aa).

(6S)-5,6,7,8-tetrahydrofolate is bound by residues L119 and 123–125; that span reads GHL. K228 is modified (N6-(pyridoxal phosphate)lysine). 370 to 372 contacts (6S)-5,6,7,8-tetrahydrofolate; sequence SPF.

Belongs to the SHMT family. Homodimer. Pyridoxal 5'-phosphate is required as a cofactor.

It localises to the cytoplasm. It carries out the reaction (6R)-5,10-methylene-5,6,7,8-tetrahydrofolate + glycine + H2O = (6S)-5,6,7,8-tetrahydrofolate + L-serine. It participates in one-carbon metabolism; tetrahydrofolate interconversion. The protein operates within amino-acid biosynthesis; glycine biosynthesis; glycine from L-serine: step 1/1. Catalyzes the reversible interconversion of serine and glycine with tetrahydrofolate (THF) serving as the one-carbon carrier. This reaction serves as the major source of one-carbon groups required for the biosynthesis of purines, thymidylate, methionine, and other important biomolecules. Also exhibits THF-independent aldolase activity toward beta-hydroxyamino acids, producing glycine and aldehydes, via a retro-aldol mechanism. The polypeptide is Serine hydroxymethyltransferase (Pelodictyon phaeoclathratiforme (strain DSM 5477 / BU-1)).